Consider the following 99-residue polypeptide: UPF0473 protein LEUM_0559 (99 aa).

This sequence belongs to the UPF0473 family.

The protein is UPF0473 protein LEUM_0559 of Leuconostoc mesenteroides subsp. mesenteroides (strain ATCC 8293 / DSM 20343 / BCRC 11652 / CCM 1803 / JCM 6124 / NCDO 523 / NBRC 100496 / NCIMB 8023 / NCTC 12954 / NRRL B-1118 / 37Y).